Consider the following 222-residue polypeptide: UPF0758 protein YicR (222 aa).

In terms of domain architecture, MPN spans 100–222; sequence PLLSPEMTRE…YVSFAERGWI (123 aa). Residues His-171, His-173, and Asp-184 each coordinate Zn(2+). Residues 171–184 carry the JAMM motif motif; the sequence is HNHPSGCAEPSKAD.

The protein belongs to the UPF0758 family. YicR subfamily.

The polypeptide is UPF0758 protein YicR (Escherichia coli (strain 55989 / EAEC)).